Here is a 475-residue protein sequence, read N- to C-terminus: Ankyrin repeat, SAM and basic leucine zipper domain-containing protein 1 (475 aa).

The tract at residues 1–24 (MAASALRGPPVAGGGESSESEDDG) is disordered. 3 positions are modified to phosphoserine: serine 17, serine 18, and serine 20. ANK repeat units follow at residues 45 to 74 (EKKEKFKKAMTIGDVSLVQELLDSGISVDS), 78 to 107 (YGWTPLMYAASVANAELVRVLLDRGANASF), 110 to 144 (DKQSILITACSAHGSEEQILKCVELLLSRNADPNV), 148 to 177 (RLMTPIMYAARDGHTQVVALLVAHGAEVNT), 181 to 210 (NGYTALTWAARQGHKNIVLKLLELGANKML), and 214 to 243 (DGKMPSEIAKRNKHHEIFNLLSFTLNPLEG). The SAM domain occupies 272 to 334 (SYTAFGDLEV…KILAALKELQ (63 aa)).

As to quaternary structure, interacts with DDX4, PIWIL1, RANBP9 and TDRD1.

It is found in the cytoplasm. Its function is as follows. Plays a central role during spermatogenesis by repressing transposable elements and preventing their mobilization, which is essential for the germline integrity. Acts via the piRNA metabolic process, which mediates the repression of transposable elements during meiosis by forming complexes composed of piRNAs and Piwi proteins and governs the methylation and subsequent repression of transposons. Its association with pi-bodies suggests a participation in the primary piRNAs metabolic process. Required prior to the pachytene stage to facilitate the production of multiple types of piRNAs, including those associated with repeats involved in the regulation of retrotransposons. May act by mediating protein-protein interactions during germ cell maturation. The polypeptide is Ankyrin repeat, SAM and basic leucine zipper domain-containing protein 1 (ASZ1) (Gorilla gorilla gorilla (Western lowland gorilla)).